Reading from the N-terminus, the 544-residue chain is Chaperonin GroEL (544 aa).

ATP contacts are provided by residues 29 to 32 (TLGP), 86 to 90 (DGTTT), Gly413, 476 to 478 (NAA), and Asp492.

It belongs to the chaperonin (HSP60) family. As to quaternary structure, forms a cylinder of 14 subunits composed of two heptameric rings stacked back-to-back. Interacts with the co-chaperonin GroES.

Its subcellular location is the cytoplasm. It carries out the reaction ATP + H2O + a folded polypeptide = ADP + phosphate + an unfolded polypeptide.. In terms of biological role, together with its co-chaperonin GroES, plays an essential role in assisting protein folding. The GroEL-GroES system forms a nano-cage that allows encapsulation of the non-native substrate proteins and provides a physical environment optimized to promote and accelerate protein folding. The polypeptide is Chaperonin GroEL (Halalkalibacterium halodurans (strain ATCC BAA-125 / DSM 18197 / FERM 7344 / JCM 9153 / C-125) (Bacillus halodurans)).